The primary structure comprises 256 residues: Aspirochlorine biosynthesis protein F (256 aa).

N-linked (GlcNAc...) asparagine glycosylation is present at asparagine 19. 3 helical membrane passes run 21–41 (SITP…GPHF), 163–183 (LVWV…FFFT), and 214–234 (FGLG…ILAV).

It is found in the membrane. It functions in the pathway mycotoxin biosynthesis. In terms of biological role, part of the gene cluster that mediates the biosynthesis of aspirochlorine (or antibiotic A30641), an unusual halogenated spiro compound with distinctive antifungal properties due to selective inhibition of protein biosynthesis, and which is also active against bacteria, viruses, and murine tumor cells. The non-ribosomal peptide synthetase (NRPS) aclP is responsible the formation of the diketopiperazine (DKP) core from the condensation of 2 phenylalanine residues. One Phe residue is tailored into chlorotyrosine by hydroxylation and chlorination, whereas the second Phe undergoes an unprecedented C-C bond cleavage to be converted into glycine. After formation of the DKP, sulfur is incorporated into the DKP by conjugation with glutathione by aclG, followed by its stepwise degradation to the thiol by aclI, aclJ and aclK, and the dithiol oxidation by aclT. In addition, oxygenases (aclB, aclC, aclL and aclO) and O-methyltransferases (aclM and aclU) act as tailoring enzymes to produce the intermediate dechloroaspirochlorine. Ultimately, chlorination of dechloroaspirochlorine by the halogenase aclH is the last step in the aspirochlorine pathway. The chain is Aspirochlorine biosynthesis protein F from Aspergillus oryzae (strain ATCC 42149 / RIB 40) (Yellow koji mold).